We begin with the raw amino-acid sequence, 268 residues long: 4-hydroxy-tetrahydrodipicolinate reductase (268 aa).

NAD(+) contacts are provided by residues 10 to 15 (GSTGRM), glutamate 36, 99 to 101 (GTT), and 123 to 126 (APNM). Histidine 156 serves as the catalytic Proton donor/acceptor. Histidine 157 lines the (S)-2,3,4,5-tetrahydrodipicolinate pocket. The Proton donor role is filled by lysine 160. (S)-2,3,4,5-tetrahydrodipicolinate is bound at residue 166–167 (GT).

It belongs to the DapB family.

It localises to the cytoplasm. It carries out the reaction (S)-2,3,4,5-tetrahydrodipicolinate + NAD(+) + H2O = (2S,4S)-4-hydroxy-2,3,4,5-tetrahydrodipicolinate + NADH + H(+). The enzyme catalyses (S)-2,3,4,5-tetrahydrodipicolinate + NADP(+) + H2O = (2S,4S)-4-hydroxy-2,3,4,5-tetrahydrodipicolinate + NADPH + H(+). Its pathway is amino-acid biosynthesis; L-lysine biosynthesis via DAP pathway; (S)-tetrahydrodipicolinate from L-aspartate: step 4/4. Catalyzes the conversion of 4-hydroxy-tetrahydrodipicolinate (HTPA) to tetrahydrodipicolinate. This Nitrosomonas eutropha (strain DSM 101675 / C91 / Nm57) protein is 4-hydroxy-tetrahydrodipicolinate reductase.